A 197-amino-acid polypeptide reads, in one-letter code: Putative phosphopantothenoylcysteine decarboxylase (197 aa).

FMN-binding positions include F52 and S102–T105. Residue N139 participates in substrate binding. Catalysis depends on C174, which acts as the Proton donor.

Belongs to the HFCD (homooligomeric flavin containing Cys decarboxylase) superfamily. As to quaternary structure, homotrimer. It depends on FMN as a cofactor.

The enzyme catalyses N-[(R)-4-phosphopantothenoyl]-L-cysteine + H(+) = (R)-4'-phosphopantetheine + CO2. It participates in cofactor biosynthesis; coenzyme A biosynthesis; CoA from (R)-pantothenate: step 3/5. In terms of biological role, necessary for the biosynthesis of coenzyme A. Catalyzes the decarboxylation of 4-phosphopantothenoylcysteine to form 4'-phosphopantotheine. This chain is Putative phosphopantothenoylcysteine decarboxylase (ppcdc), found in Dictyostelium discoideum (Social amoeba).